We begin with the raw amino-acid sequence, 468 residues long: Soluble pyridine nucleotide transhydrogenase (468 aa).

E36–C45 serves as a coordination point for FAD.

Belongs to the class-I pyridine nucleotide-disulfide oxidoreductase family. FAD is required as a cofactor.

The protein localises to the cytoplasm. The catalysed reaction is NAD(+) + NADPH = NADH + NADP(+). In terms of biological role, conversion of NADPH, generated by peripheral catabolic pathways, to NADH, which can enter the respiratory chain for energy generation. The sequence is that of Soluble pyridine nucleotide transhydrogenase from Hamiltonella defensa subsp. Acyrthosiphon pisum (strain 5AT).